A 20-amino-acid polypeptide reads, in one-letter code: TPQIQKPAPQFSKTALLPDE.

The interval 1–20 is disordered; the sequence is TPQIQKPAPQFSKTALLPDE.

In Naegleria fowleri (Brain eating amoeba), this protein is Unknown protein NF015 from 2D-PAGE.